We begin with the raw amino-acid sequence, 1237 residues long: Structural protein VP1 (1237 aa).

The 217-residue stretch at 1006-1222 (EPLRTLLFKL…ENDVRIAMIH (217 aa)) folds into the PPPDE domain. Residues H1040 and C1192 contribute to the active site.

The protein resides in the virion. The chain is Structural protein VP1 from Rice ragged stunt virus (isolate Thailand) (RRSV).